Here is a 313-residue protein sequence, read N- to C-terminus: Leucine zipper protein 4 (313 aa).

Residues 1–119 (MASFRKLTLS…PLIEQEKCSD (119 aa)) form an interaction with DDX39B/UAP56 region. 2 disordered regions span residues 1-238 (MASF…QGDL) and 290-313 (QSGRSHGQSERHQRYSTGKNTITT). The UAP56-binding motif (UBM); required for proper nuclear localization signature appears at 22-40 (KVNFLDMSLDDIIIYKELE). Basic and acidic residues predominate over residues 34–60 (IIYKELEGTNAEEEKNKRQNHSKKESP). Residues 51-80 (RQNHSKKESPSRQQSKAHRHRHRRGYSRCR) are arg-rich; required for RNA-binding. Residues 65-77 (SKAHRHRHRRGYS) are compositionally biased toward basic residues. Residues 81–92 (SNSEEGNHDKKP) are compositionally biased toward basic and acidic residues. Positions 126–141 (EKNQGQSEGNQHQSEG) are enriched in polar residues. Over residues 142-168 (NPDKSEESQGQPEENHHSERSRNHLER) the composition is skewed to basic and acidic residues. Positions 169–179 (SLSQSDRSQGQ) are enriched in polar residues. The interval 178-236 (GQLKRHHPQYERSHGQYKRSHGQSERSHGHSERSHGHSERSHGHSERSHGHSKRSRSQG) is RS-containing His-rich (RS-H); necessary for nuclear localization. Basic and acidic residues predominate over residues 199–226 (GQSERSHGHSERSHGHSERSHGHSERSH). A Phosphoserine modification is found at Ser-234. Residues 238 to 287 (LVDTQSDLIATQRDLIATQKDLIATQRDLIATQRDLIVTQRDLVATERDL) form a leucine-zipper; required for RNA-binding and for its relocalization to the cytoplasm during cell division region. The tract at residues 241–313 (TQSDLIATQR…YSTGKNTITT (73 aa)) is interaction with NXF1. Over residues 304–313 (YSTGKNTITT) the composition is skewed to polar residues.

In terms of assembly, interacts with NXF1, NXF2, THOC1, THOC5, DDX39B/UAP56 and SRRT. In terms of tissue distribution, expressed specifically in testis. Also expressed in a wide variety of cancer types, but particularly high levels of expression observed in melanoma cells.

It is found in the nucleus. The protein localises to the cytoplasm. In terms of biological role, export adapter involved in mRNA nuclear export in cancer cells. Binds and enhances the RNA-binding activity of the nuclear RNA export factor NXF1. Can restore mRNA export function in cells compromised by loss of mRNA export adapters. The polypeptide is Leucine zipper protein 4 (LUZP4) (Homo sapiens (Human)).